A 370-amino-acid polypeptide reads, in one-letter code: Putative F-box protein At1g47390 (370 aa).

One can recognise an F-box domain in the interval 1-47; it reads MAPEEKLPCELIEEILSRVPPESLVRFRTVSKKWNALFDDKMFINNH.

In Arabidopsis thaliana (Mouse-ear cress), this protein is Putative F-box protein At1g47390.